Consider the following 75-residue polypeptide: UPF0181 protein ETA_15280 (75 aa).

This sequence belongs to the UPF0181 family.

The sequence is that of UPF0181 protein ETA_15280 from Erwinia tasmaniensis (strain DSM 17950 / CFBP 7177 / CIP 109463 / NCPPB 4357 / Et1/99).